Here is a 211-residue protein sequence, read N- to C-terminus: MAVVDLKARPRAGRGKGYRNRLKQNGLIPAVIYGKEVGSLLLEVETRAVQDILTKTGRNALIQLRVEPEKGRAKKYDAIIKDVHMHPYKNEFFHVDFHQISLKDELTTSVNLKLTGSAPGVTAGGRLEQLIRQVEVSCLPRNIPDHIEVDVSGLGIGDAIHVSDLKAPEGVKFETDGDVTVVTLIAPHREEEKAPEETGEAAPAPTPETGQ.

The segment at 188 to 211 (HREEEKAPEETGEAAPAPTPETGQ) is disordered. Residues 200–211 (EAAPAPTPETGQ) show a composition bias toward low complexity.

This sequence belongs to the bacterial ribosomal protein bL25 family. CTC subfamily. In terms of assembly, part of the 50S ribosomal subunit; part of the 5S rRNA/L5/L18/L25 subcomplex. Contacts the 5S rRNA. Binds to the 5S rRNA independently of L5 and L18.

This is one of the proteins that binds to the 5S RNA in the ribosome where it forms part of the central protuberance. In Desulforudis audaxviator (strain MP104C), this protein is Large ribosomal subunit protein bL25.